The primary structure comprises 843 residues: Protein PLASTID MOVEMENT IMPAIRED 1 (843 aa).

A compositionally biased stretch (polar residues) spans 30 to 58 (PQVSVGNRRTNSLALPRSSVPSLVTSADE). Disordered stretches follow at residues 30-65 (PQVS…ARAE) and 88-116 (LEVE…SGVK). Residues 131–284 (LVRIGMQKLS…ELALKLGFQI (154 aa)) form the C2 NT-type domain. Disordered regions lie at residues 300 to 412 (FGMK…GTIG) and 450 to 472 (MMKD…EEEQ). A compositionally biased stretch (polar residues) spans 307 to 336 (KPKNFANSFGRKQSKTSFSVPSPKMTSRSE). Ser-314 and Ser-328 each carry phosphoserine. Residues 365–381 (PEEKPVQKNDKPEQRAE) show a composition bias toward basic and acidic residues. The residue at position 404 (Thr-404) is a Phosphothreonine. Ser-407 bears the Phosphoserine mark. Position 410 is a phosphothreonine (Thr-410). Acidic residues predominate over residues 456–472 (DGGDGETESQRLDEEEQ). At Ser-507 the chain carries Phosphoserine.

As to expression, expressed in leaves, stems, cauline leaves, and flowers but not in roots. Present in leaves in both mesophyll and pavement cells.

The protein localises to the cytoplasm. Functionally, necessary for chloroplast and nuclear photorelocation movements via the regulation of chloroplast-actin (cp-actin) filaments in mesophyll cells, and together with PMIR1, in pavement cells. Required component for both the low- and high-light-dependent chloroplast movement responses via an abscisic acid (ABA) pathway. Involved in the ABA response pathway during seed germination. Modulates ABA accumulation during periods of water deficit at the seedling stage. This is Protein PLASTID MOVEMENT IMPAIRED 1 from Arabidopsis thaliana (Mouse-ear cress).